The chain runs to 173 residues: Translation initiation factor IF-3 (173 aa).

Belongs to the IF-3 family. In terms of assembly, monomer.

The protein resides in the cytoplasm. IF-3 binds to the 30S ribosomal subunit and shifts the equilibrium between 70S ribosomes and their 50S and 30S subunits in favor of the free subunits, thus enhancing the availability of 30S subunits on which protein synthesis initiation begins. This Methylorubrum populi (strain ATCC BAA-705 / NCIMB 13946 / BJ001) (Methylobacterium populi) protein is Translation initiation factor IF-3.